The chain runs to 155 residues: MAAGSITTLPTESEDGGNTPFSPGSFKDPKRLYCKNGGFFLRINSDGRVDGSRDKSDSHIKLQLQAVERGVVSIKGITANRYLAMKEDGRLTSLRCITDECFFFERLEANNYNTYRSRKYSSWYVALKRTGQYKNGSSTGPGQKAILFLPMSAKS.

The propeptide occupies 1–9 (MAAGSITTL). The span at 1-11 (MAAGSITTLPT) shows a compositional bias: polar residues. The segment at 1-24 (MAAGSITTLPTESEDGGNTPFSPG) is disordered. Heparin-binding positions include 27-31 (KDPKR) and 116-119 (RSRK).

Belongs to the heparin-binding growth factors family.

It localises to the secreted. It is found in the nucleus. Functionally, acts as a ligand for FGFR1, FGFR2, FGFR3 and FGFR4. Also acts as an integrin ligand which is required for FGF2 signaling. Plays an important role in the regulation of cell survival, cell division, cell differentiation and cell migration. Functions as a potent mitogen in vitro. Can induce angiogenesis. This Xenopus laevis (African clawed frog) protein is Fibroblast growth factor 2 (fgf2).